The primary structure comprises 499 residues: Protein singed wings 2 (499 aa).

A signal peptide spans 1–29 (MPSGVFQKRPKAAETISLFCMILIRLSRA). LRR repeat units lie at residues 154–175 (ELHT…TFKR) and 178–199 (PLKV…LLLP). Positions 210 to 265 (NPWNCTRNFKWLLLQPEKGRLVVDRDELICTDRKYKERQMLMVMHYKLELKRQCQS) constitute an LRRCT 1 domain. LRR repeat units follow at residues 307–328 (NTTT…RDNP), 332–353 (HVVD…EDTY), and 357–378 (NFRL…ALDN). One can recognise an LRRCT 2 domain in the interval 394–449 (NPWHCTCKFGSRMRELLTKYKDIVRDAWNVSCTYRLDDDQLLAKVLTLSRQEMCNL).

In terms of biological role, has a role in the ecdysone induced cascade; probably indirect control of 'late' ecdysone genes. This Drosophila melanogaster (Fruit fly) protein is Protein singed wings 2.